A 329-amino-acid polypeptide reads, in one-letter code: 31 kDa immunogenic protein (329 aa).

The signal sequence occupies residues 1 to 28 (MKFGSKIRRLAVAAVAGAIALGASFAVA).

The protein is 31 kDa immunogenic protein (bcsP31) of Brucella abortus biovar 1 (strain 9-941).